A 311-amino-acid polypeptide reads, in one-letter code: tRNA pseudouridine synthase B (311 aa).

The active-site Nucleophile is Asp39. The disordered stretch occupies residues 237–268 (RELSEQETTEISFGRRIAAGPGAGTPDAATAE). Positions 254–268 (AAGPGAGTPDAATAE) are enriched in low complexity.

Belongs to the pseudouridine synthase TruB family. Type 1 subfamily.

It carries out the reaction uridine(55) in tRNA = pseudouridine(55) in tRNA. Functionally, responsible for synthesis of pseudouridine from uracil-55 in the psi GC loop of transfer RNAs. The polypeptide is tRNA pseudouridine synthase B (Paenarthrobacter aurescens (strain TC1)).